We begin with the raw amino-acid sequence, 166 residues long: Tetranectin-like protein (166 aa).

Cystine bridges form between Cys37-Cys47, Cys64-Cys160, and Cys136-Cys152. Residues 43 to 161 (IHKKCYLASR…CRSEKRYICE (119 aa)) form the C-type lectin domain.

The sequence is that of Tetranectin-like protein from Carcharhinus perezii (Reef shark).